The chain runs to 200 residues: Protein GrpE (200 aa).

A compositionally biased stretch (basic and acidic residues) spans 1 to 12 (MSNEEIKNKDEQ). A disordered region spans residues 1-30 (MSNEEIKNKDEQLQQDAVETEAEVVGTDAD).

The protein belongs to the GrpE family. As to quaternary structure, homodimer.

The protein resides in the cytoplasm. Functionally, participates actively in the response to hyperosmotic and heat shock by preventing the aggregation of stress-denatured proteins, in association with DnaK and GrpE. It is the nucleotide exchange factor for DnaK and may function as a thermosensor. Unfolded proteins bind initially to DnaJ; upon interaction with the DnaJ-bound protein, DnaK hydrolyzes its bound ATP, resulting in the formation of a stable complex. GrpE releases ADP from DnaK; ATP binding to DnaK triggers the release of the substrate protein, thus completing the reaction cycle. Several rounds of ATP-dependent interactions between DnaJ, DnaK and GrpE are required for fully efficient folding. This Vibrio cholerae serotype O1 (strain ATCC 39315 / El Tor Inaba N16961) protein is Protein GrpE.